A 605-amino-acid chain; its full sequence is DNA mismatch repair protein MutL (605 aa).

This sequence belongs to the DNA mismatch repair MutL/HexB family.

This protein is involved in the repair of mismatches in DNA. It is required for dam-dependent methyl-directed DNA mismatch repair. May act as a 'molecular matchmaker', a protein that promotes the formation of a stable complex between two or more DNA-binding proteins in an ATP-dependent manner without itself being part of a final effector complex. This Methylocella silvestris (strain DSM 15510 / CIP 108128 / LMG 27833 / NCIMB 13906 / BL2) protein is DNA mismatch repair protein MutL.